The following is a 227-amino-acid chain: Adapter protein MecA 1 (227 aa).

It belongs to the MecA family. In terms of assembly, homodimer.

Its function is as follows. Enables the recognition and targeting of unfolded and aggregated proteins to the ClpC protease or to other proteins involved in proteolysis. Acts negatively in the development of competence by binding ComK and recruiting it to the ClpCP protease. When overexpressed, inhibits sporulation. Also involved in Spx degradation by ClpC. This chain is Adapter protein MecA 1 (mecA1), found in Bacillus anthracis.